Here is a 608-residue protein sequence, read N- to C-terminus: Actin-related protein 8 (608 aa).

Positions 1 to 20 (MQRSRASSTSSGRLQASQQV) are disordered. An ATP-binding site is contributed by 272 to 275 (DIGA).

The protein belongs to the actin family. ARP8 subfamily. In terms of assembly, component of the chromatin remodeling Ino80 complex. Exists as monomers and dimers, but the dimer is most probably the biologically relevant form required for stable interactions with histones that exploits the twofold symmetry of the nucleosome core.

The protein localises to the nucleus. Its function is as follows. Plays an important role in the functional organization of mitotic chromosomes. Exhibits low basal ATPase activity, and unable to polymerize. In terms of biological role, proposed core component of the chromatin remodeling INO80 complex which is involved in transcriptional regulation, DNA replication and probably DNA repair. Strongly prefer nucleosomes and H3-H4 tetramers over H2A-H2B dimers, suggesting it may act as a nucleosome recognition module within the complex. This is Actin-related protein 8 from Drosophila pseudoobscura pseudoobscura (Fruit fly).